Consider the following 486-residue polypeptide: Probable FAD-binding monooxygenase ltbD (486 aa).

The tract at residues 186 to 243 (PAGDGGTNDQGPSRAQSTASSGGSGRPRSTESPQSGAQASTTPTSPPTTQSTGDDPAA) is disordered. Over residues 194 to 206 (DQGPSRAQSTASS) the composition is skewed to polar residues. Residues 220–241 (SGAQASTTPTSPPTTQSTGDDP) are compositionally biased toward low complexity.

The protein belongs to the FAD-binding monooxygenase family. In terms of assembly, homodimer. FAD serves as cofactor.

In terms of biological role, probable FAD-binding monooxygenase; part of the gene cluster that mediates the biosynthesis of luteodienoside A, a glycosylated polyketide consisting of an unusual 1-O-beta-D-glucopyranosyl-myo-inositol (glucinol) ester of 3-hydroxy-2,2,4-trimethylocta-4,6-dienoic acid. The HR-PKS ltbA produces the trimethylated polyketide chain from acetyl-CoA, malonyl-CoA and S-adenosylmethionine (SAM), and the ltbA cAT domain then uses glucinol produced by the glycosyltransferase ltbB as an offloading substrate to release luteodienoside A. Since ltbA and ltbB are sufficient for the biosynthesis of luteodienoside A, the functions of the methyltransferase ltbC and the FAD-binding monooxygenase ltbD within the pathway remain obscur. The chain is Probable FAD-binding monooxygenase ltbD from Aspergillus luteorubrus.